We begin with the raw amino-acid sequence, 382 residues long: Probable purine permease 4 (382 aa).

10 consecutive transmembrane segments (helical) span residues 25-45 (LTLL…SSLL), 62-82 (WVQS…HYVL), 98-118 (LIFS…FSWG), 121-141 (YLPV…TLIL), 150-170 (ITFS…LLAL), 185-205 (YFIG…YLPV), 224-244 (LVME…EGGF), 260-280 (TFYW…SFAA), 291-311 (ITGG…GVVA), and 315-335 (VFGG…SSYT). An EamA domain is found at 66–170 (AGFPLLLILI…LTLSSVLLAL (105 aa)). The tract at residues 345–364 (EEKEKGEYSGVKTTEDSGEM) is disordered.

The protein belongs to the purine permeases (TC 2.A.7.14) family.

The protein resides in the membrane. This is Probable purine permease 4 (PUP4) from Arabidopsis thaliana (Mouse-ear cress).